We begin with the raw amino-acid sequence, 442 residues long: HTH-type transcriptional regulator NorG (442 aa).

Positions 2-46 constitute an HTH gntR-type domain; that stretch reads KIPSHRQLAIQYNVNRVTIIKSIELLEAEGFIYTKVGSGTYVNDY. Positions 6-25 form a DNA-binding region, H-T-H motif; that stretch reads HRQLAIQYNVNRVTIIKSIE. At Lys288 the chain carries N6-(pyridoxal phosphate)lysine.

The protein in the C-terminal section; belongs to the class-I pyridoxal-phosphate-dependent aminotransferase family. It depends on pyridoxal 5'-phosphate as a cofactor.

Positively regulates the expression of the NorB efflux pump and negatively regulates the expression of the AbcA efflux pump. Binds specifically to the promoters of norA, norB and norC and abcA genes. Could also have an aminotransferase activity. This Staphylococcus aureus (strain USA300) protein is HTH-type transcriptional regulator NorG (norG).